The primary structure comprises 414 residues: Ornithine aminotransferase (414 aa).

An intrachain disulfide couples cysteine 154 to cysteine 163. Lysine 262 carries the N6-(pyridoxal phosphate)lysine modification.

Belongs to the class-III pyridoxal-phosphate-dependent aminotransferase family. In terms of assembly, homodimer. Requires pyridoxal 5'-phosphate as cofactor. In terms of processing, the disulfide bond between Cys-154 and Cys-163 is reduced by TRX1 which increases OAT catalytic activity.

It is found in the cytoplasm. It catalyses the reaction a 2-oxocarboxylate + L-ornithine = L-glutamate 5-semialdehyde + an L-alpha-amino acid. It carries out the reaction L-ornithine + 2-oxoglutarate = L-glutamate 5-semialdehyde + L-glutamate. It functions in the pathway amino-acid biosynthesis; L-proline biosynthesis; L-glutamate 5-semialdehyde from L-ornithine: step 1/1. Its activity is regulated as follows. Unlike for mammalian OATs, activity is increased by TRX1-mediated reduction of the disulfide bond between Cys-154 and Cys-163. Binding to TRX1 may also induce conformational changes that facilitate substrate binding. Functionally, catalyzes the transamination of alpha-ketoglutarate with ornithine or N-acetylornithine and of glutamate-5-semialdehyde with glutamate and alanine. In Plasmodium chabaudi chabaudi, this protein is Ornithine aminotransferase.